Reading from the N-terminus, the 194-residue chain is UPF0232 protein MSMEG_0004/MSMEI_0006 (194 aa).

The span at 1 to 14 shows a compositional bias: acidic residues; it reads MTGPFDDDGPEEDA. The disordered stretch occupies residues 1–81; the sequence is MTGPFDDDGP…GPGPDARDPQ (81 aa). Positions 30–52 are enriched in basic and acidic residues; that stretch reads DLVRRTLEEARGAARSQGKDVGR.

Belongs to the UPF0232 family.

The polypeptide is UPF0232 protein MSMEG_0004/MSMEI_0006 (Mycolicibacterium smegmatis (strain ATCC 700084 / mc(2)155) (Mycobacterium smegmatis)).